Reading from the N-terminus, the 192-residue chain is VQ motif-containing protein 22 (192 aa).

Residues 24-38 (ASTAVTTTTAGDTTS) show a composition bias toward low complexity. Residues 24-65 (ASTAVTTTTAGDTTSIDSRLSPETGRVTKPTRRRSRASRRTP) form a disordered region. A compositionally biased stretch (basic residues) spans 52–62 (KPTRRRSRASR). The VQ motif lies at 76–85 (FRAMVQQYTG). Disordered regions lie at residues 101-135 (FSLT…PQRP) and 163-192 (FGTV…SRLQ). 2 stretches are compositionally biased toward low complexity: residues 102-114 (SLTS…AGSS) and 175-192 (APSS…SRLQ).

The protein localises to the nucleus. Its function is as follows. May function as positive regulator of plant growth. In Arabidopsis thaliana (Mouse-ear cress), this protein is VQ motif-containing protein 22.